The sequence spans 75 residues: Probable protein BRICK1-A (75 aa).

A coiled-coil region spans residues 41–72 (MSCRSRLATLNEKLTALERRIEYIEARVTKGE).

The protein belongs to the BRK1 family.

Its subcellular location is the cytoplasm. It localises to the cytoskeleton. In terms of biological role, involved in regulation of actin and microtubule organization. Part of a WAVE complex that activates the Arp2/3 complex. The polypeptide is Probable protein BRICK1-A (brk1-a) (Xenopus laevis (African clawed frog)).